The chain runs to 893 residues: MKIGSGFLSGGGGPSSSGGSGSGGSSGSASGGSGGGRRAEMEPTFPQSMVMFNHRLPPVTSFTRPAGTAAPPPQCVLSSSTSAAPAAEPPPPPAPDMTFKKEPAASAAAFPSQRTSWGFLQSLVSIKQEKPADPEEQPSHHHHHHHHYGGLFAGAEERSPGLGGGEGGSHGVIQDLSLLHQHAQQQPAQHHRDVLLSSGSRTDEHGNQEPKQDANVKKAKRPKPESQGIKAKRKPSASSKPLVGEGEGAVLSPSQKPHICDHCSAAFRSSYHLRRHVLIHTGERPFQCSQCSMGFIQKYLLQRHEKIHSREKPFGCDQCSMKFIQKYHMERHKRTHSGEKPYKCDTCQQYFSRTDRLLKHRRTCGEAIAKGAASAEPGSSNHNSMGNLAVLSQGNTSSSRRKSKSKSIAIENKEHKTGKTNESQMSNNINMQSYSVEMPTVSTSGSIIGTGIDELQKRVPKLIFKKGSRKNADKSYLNFVSPLPDVVGQKSLSGKPGGSLGIVSNNSVETISLLQSTSGKQGPISSNYDDAMQFSKKRRYLPTASSNSAFSINVGHMVSQQSVIQSAGVSVLDNEAPLSLIDSSALNAEIKSCHDKSGIPDEVLQSILDQYSGKSETQKEDPFNLTEPRVDLHTSGEHSELVQEENLSPGTQTPSNDKTSMLQEYSKYLQQAFEKSTNAGFTLGHGFQFVSLSSPLHNHTLFPEKQIYTTSPLECGFGQSVTSVLPSSLPKPPFGMLFGSQPGLYLSALDATHQQLTPSQELDDLIDSQKNLETSSAFQSSSQKLTSQKEQQKNLESSTSFQIPSQELASQIDPQKDIEPRTTYQIENFAQAFGSQFKSGSRVPMTFITNSNGEVDHRVRTSVSDFSGYTNMMSDVSEPCSTRVKTPTSQSYR.

4 disordered regions span residues Met1–Gln113, Ile126–Tyr148, Ala153–Val172, and Ser198–Leu251. Lys2 is covalently cross-linked (Glycyl lysine isopeptide (Lys-Gly) (interchain with G-Cter in SUMO2)). A compositionally biased stretch (gly residues) spans Phe7–Gly36. Residues Lys100 and Lys127 each participate in a glycyl lysine isopeptide (Lys-Gly) (interchain with G-Cter in SUMO2) cross-link. Residues Lys127 to Ser139 are compositionally biased toward basic and acidic residues. A compositionally biased stretch (gly residues) spans Gly161–His170. Positions Arg201–Val216 are enriched in basic and acidic residues. Glycyl lysine isopeptide (Lys-Gly) (interchain with G-Cter in SUMO2) cross-links involve residues Lys211, Lys217, Lys223, Lys230, Lys240, and Lys256. 3 C2H2-type zinc fingers span residues His258–His280, Phe286–His308, and Phe314–His336. Residues Lys298 and Lys322 each participate in a glycyl lysine isopeptide (Lys-Gly) (interchain with G-Cter in SUMO2) cross-link. A C2H2-type 4; atypical zinc finger spans residues Tyr342–Cys364. Lys370 participates in a covalent cross-link: Glycyl lysine isopeptide (Lys-Gly) (interchain with G-Cter in SUMO2). Residues Gly371–Met425 form a disordered region. The span at Pro377–Thr396 shows a compositional bias: polar residues. Ser392 bears the Phosphoserine mark. Residues Lys406, Lys413, Lys457, and Lys474 each participate in a glycyl lysine isopeptide (Lys-Gly) (interchain with G-Cter in SUMO2) cross-link. Ser481 carries the post-translational modification Phosphoserine. Glycyl lysine isopeptide (Lys-Gly) (interchain with G-Cter in SUMO2) cross-links involve residues Lys490, Lys495, Lys536, Lys596, Lys614, and Lys619. The tract at residues Gly613–Lys658 is disordered. Over residues Glu616–Leu641 the composition is skewed to basic and acidic residues. Positions Glu645–Lys658 are enriched in polar residues. Ser648 bears the Phosphoserine mark. Residues Lys658 and Lys667 each participate in a glycyl lysine isopeptide (Lys-Gly) (interchain with G-Cter in SUMO2) cross-link. The span at Ser775 to Asp813 shows a compositional bias: polar residues. Positions Ser775–Gln815 are disordered. Residue Ser782 is modified to Phosphoserine. Glycyl lysine isopeptide (Lys-Gly) (interchain with G-Cter in SUMO2) cross-links involve residues Lys784, Lys789, and Lys793. Residue Ser805 is modified to Phosphoserine. Residues Lys816 and Lys838 each participate in a glycyl lysine isopeptide (Lys-Gly) (interchain with G-Cter in SUMO2) cross-link. Position 886 is a phosphothreonine (Thr886).

This sequence belongs to the krueppel C2H2-type zinc-finger protein family. As to quaternary structure, interacts with NANOG. Associates with the NuRD complex.

The protein resides in the nucleus. In terms of biological role, transcription repressor that plays a role in regulation of embryonic stem cells (ESCs) differentiation. Required for ESCs differentiation and acts by mediating autorepression of NANOG in ESCs: binds to the NANOG promoter and promotes association of NANOG protein to its own promoter and recruits the NuRD complex, which deacetylates histones. Not required for establishement and maintenance of ESCs. Represses the transcription of a number of genes including GAST, ODC1 and VIM. Binds to the G-rich box in the enhancer region of these genes. The sequence is that of Zinc finger protein 281 (Znf281) from Mus musculus (Mouse).